The sequence spans 485 residues: Probable alginate O-acetylase AlgI (485 aa).

Helical transmembrane passes span V7–G24, F39–I61, W78–V100, F115–I137, N150–F172, F312–W334, A360–A382, A402–L424, and I461–F483. Residue H322 is part of the active site.

The protein belongs to the membrane-bound acyltransferase family.

The protein resides in the cell inner membrane. It functions in the pathway glycan biosynthesis; alginate biosynthesis. Functionally, together with AlgJ and AlgF, forms an inner membrane complex which probably interacts with the alginate polymerization-transport complex and adds acetyl groups at the O-2 and O-3 positions of mannuronate residues. Acetylation of alginate is important for the architecture of biofilms and increases the ability of alginate to act as a defense barrier. The chain is Probable alginate O-acetylase AlgI (algI) from Pseudomonas putida (strain ATCC 47054 / DSM 6125 / CFBP 8728 / NCIMB 11950 / KT2440).